A 310-amino-acid polypeptide reads, in one-letter code: MEAPPEHCPGVESEQAGKVSACAGCPNQGICSDPNRKVEDPGKALVAESLKDVKNKLLILSGKGGVGKSTVTSLLTRYLARSCPNSNFGVLDIDICGPSQPRLLGALGENVHQSGSGWSPVGIDDNVCLMSIGFLLGSVDDAIIWRGPKKNGMIRQFLSEVDWGNLDLLLLDTPPGTSDEHLSVVSYLKDDTQPESLRAVIVTTPQEVALLDVRKEINFCKKQNIPIVGVIENMSSFRCGNCGNSSEIFPAKTGGAAAMCAEMEVPLLGSLPLDPQIAKACDSGDDITEIKNSTTEALDGICSKIMSSFS.

[4Fe-4S] cluster is bound by residues C8, C22, C25, and C31. 62–69 contacts ATP; the sequence is GKGGVGKS. C239 and C242 together coordinate [4Fe-4S] cluster.

It belongs to the Mrp/NBP35 ATP-binding proteins family. NUBP1/NBP35 subfamily. Heterotetramer of 2 Nubp1 and 2 Nubp2 chains. It depends on [4Fe-4S] cluster as a cofactor.

The protein resides in the cytoplasm. Functionally, component of the cytosolic iron-sulfur (Fe/S) protein assembly (CIA) machinery. Required for maturation of extramitochondrial Fe-S proteins. The Nubp1-Nubp2 heterotetramer forms a Fe-S scaffold complex, mediating the de novo assembly of an Fe-S cluster and its transfer to target apoproteins. The protein is Cytosolic Fe-S cluster assembly factor Nubp1 homolog of Drosophila ananassae (Fruit fly).